The following is a 69-amino-acid chain: DNA gyrase inhibitor YacG (69 aa).

Zn(2+)-binding residues include cysteine 14, cysteine 17, cysteine 33, and cysteine 37. Residues 46–69 form a disordered region; it reads ADEEKSIPGAPDMSDSDGWSEDQY. Acidic residues predominate over residues 59–69; sequence SDSDGWSEDQY.

The protein belongs to the DNA gyrase inhibitor YacG family. Interacts with GyrB. It depends on Zn(2+) as a cofactor.

Inhibits all the catalytic activities of DNA gyrase by preventing its interaction with DNA. Acts by binding directly to the C-terminal domain of GyrB, which probably disrupts DNA binding by the gyrase. The polypeptide is DNA gyrase inhibitor YacG (Aliivibrio fischeri (strain ATCC 700601 / ES114) (Vibrio fischeri)).